The sequence spans 274 residues: Exosome complex component Rrp42 (274 aa).

It belongs to the RNase PH family. Rrp42 subfamily. Component of the archaeal exosome complex. Forms a hexameric ring-like arrangement composed of 3 Rrp41-Rrp42 heterodimers. The hexameric ring associates with a trimer of Rrp4 and/or Csl4 subunits.

The protein resides in the cytoplasm. Its function is as follows. Non-catalytic component of the exosome, which is a complex involved in RNA degradation. Contributes to the structuring of the Rrp41 active site. The chain is Exosome complex component Rrp42 from Pyrococcus abyssi (strain GE5 / Orsay).